The following is a 262-amino-acid chain: Phycoerythrobilin:ferredoxin oxidoreductase (262 aa).

It belongs to the HY2 family.

It catalyses the reaction (3Z)-phycoerythrobilin + oxidized 2[4Fe-4S]-[ferredoxin] = 15,16-dihydrobiliverdin + reduced 2[4Fe-4S]-[ferredoxin] + 2 H(+). Functionally, catalyzes the two-electron reduction of the C2 and C3(1) diene system of 15,16-dihydrobiliverdin. The sequence is that of Phycoerythrobilin:ferredoxin oxidoreductase (pebB) from Parasynechococcus marenigrum (strain WH8102).